Reading from the N-terminus, the 196-residue chain is Calmodulin-like protein 4 (196 aa).

A disordered region spans residues 1–43; the sequence is MAAEHLLPGPPPSLADFRLEAGGKGTERGSGSSKPTGSSRGPR. Over residues 17–27 the composition is skewed to basic and acidic residues; sequence FRLEAGGKGTE. Polar residues predominate over residues 29–39; it reads GSGSSKPTGSS. 4 consecutive EF-hand domains span residues 51-86, 87-122, 124-159, and 160-195; these read DQIN…LGAS, PTPG…QIKQ, DPKK…LGEK, and LTHK…PGRD.

It belongs to the calmodulin family. In terms of assembly, interacts with MYO7B; the interaction mediates the association of CALML4 with the IMAC/intermicrovillar adhesion complex. Interacts with MYO7A. As to expression, expressed in the intestinal tract. Dominant transcript in the intestinal tract.

The protein resides in the cell projection. The protein localises to the microvillus. Functionally, as part of the intermicrovillar adhesion complex/IMAC plays a role in epithelial brush border differentiation, controlling microvilli organization and length. Acts as a light chain for MYO7B and is required for efficient targeting of the IMAC to the tips of border brush microvilli. The polypeptide is Calmodulin-like protein 4 (Homo sapiens (Human)).